The sequence spans 156 residues: ATP synthase subunit b (156 aa).

A helical membrane pass occupies residues 7-29 (LLGQAISFLLFVWFCMKFVWPPL).

It belongs to the ATPase B chain family. As to quaternary structure, F-type ATPases have 2 components, F(1) - the catalytic core - and F(0) - the membrane proton channel. F(1) has five subunits: alpha(3), beta(3), gamma(1), delta(1), epsilon(1). F(0) has three main subunits: a(1), b(2) and c(10-14). The alpha and beta chains form an alternating ring which encloses part of the gamma chain. F(1) is attached to F(0) by a central stalk formed by the gamma and epsilon chains, while a peripheral stalk is formed by the delta and b chains.

It localises to the cell inner membrane. Functionally, f(1)F(0) ATP synthase produces ATP from ADP in the presence of a proton or sodium gradient. F-type ATPases consist of two structural domains, F(1) containing the extramembraneous catalytic core and F(0) containing the membrane proton channel, linked together by a central stalk and a peripheral stalk. During catalysis, ATP synthesis in the catalytic domain of F(1) is coupled via a rotary mechanism of the central stalk subunits to proton translocation. Component of the F(0) channel, it forms part of the peripheral stalk, linking F(1) to F(0). The protein is ATP synthase subunit b of Shewanella pealeana (strain ATCC 700345 / ANG-SQ1).